A 1187-amino-acid polypeptide reads, in one-letter code: Tyrosine-protein phosphatase non-receptor type 14 (1187 aa).

In terms of domain architecture, FERM spans 21–306; it reads FVTRIRLLDS…TRHKFYKQNK (286 aa). Phosphoserine is present on residues Ser-314, Ser-461, and Ser-486. The segment covering 510-524 has biased composition (polar residues); that stretch reads LVSPSDQRNPKNNVV. Positions 510–531 are disordered; the sequence is LVSPSDQRNPKNNVVPSKPGAS. 4 positions are modified to phosphoserine: Ser-591, Ser-593, Ser-594, and Ser-642. Disordered stretches follow at residues 671–690 and 787–824; these read LREQ…PQLP and KAIS…KKEP. Residues 815–824 show a composition bias toward basic and acidic residues; the sequence is SVKERVKKEP. Ser-831 is subject to Phosphoserine. The Tyrosine-protein phosphatase domain occupies 909–1180; sequence VFTEYEQIPK…KFVYQVLIQF (272 aa). Substrate contacts are provided by residues Asp-1079, 1121-1127, and Gln-1165; that span reads CSAGVGR. The active-site Phosphocysteine intermediate is Cys-1121.

This sequence belongs to the protein-tyrosine phosphatase family. Non-receptor class subfamily. In terms of assembly, interacts with FLT4; the interaction is enhanced by stimulation with VEGFC. Interacts (via PPxY motifs) with YAP1 (via WW domains); this interaction leads to the cytoplasmic sequestration of YAP1 and inhibits its transcriptional co-activator activity. In terms of processing, ubiquitinated by the ECS (Elongin BC-CUL2/5-SOCS-box protein)/LRR1 E3 ligase complex and subsequently targeted to proteasomal degradation. In terms of tissue distribution, ubiquitous.

It is found in the cytoplasm. The protein resides in the cytoskeleton. It localises to the nucleus. The catalysed reaction is O-phospho-L-tyrosyl-[protein] + H2O = L-tyrosyl-[protein] + phosphate. Functionally, protein tyrosine phosphatase which may play a role in the regulation of lymphangiogenesis, cell-cell adhesion, cell-matrix adhesion, cell migration, cell growth and also regulates TGF-beta gene expression, thereby modulating epithelial-mesenchymal transition. Mediates beta-catenin dephosphorylation at adhesion junctions. Acts as a negative regulator of the oncogenic property of YAP, a downstream target of the hippo pathway, in a cell density-dependent manner. May function as a tumor suppressor. In Homo sapiens (Human), this protein is Tyrosine-protein phosphatase non-receptor type 14 (PTPN14).